A 102-amino-acid polypeptide reads, in one-letter code: MHNRSQGFFFSSCHPQNHVSYGCQSPSFIFCRCQSLNFVSRTCYPLSYFSYGNQTIGSISNSFRSLNYVSHSFQPISFMHSSFQPACSDFVGWQSPFLRRTC.

Belongs to the PMG family. As to quaternary structure, interacts with hair keratins.

Its function is as follows. In the hair cortex, hair keratin intermediate filaments are embedded in an interfilamentous matrix, consisting of hair keratin-associated proteins (KRTAP), which are essential for the formation of a rigid and resistant hair shaft through their extensive disulfide bond cross-linking with abundant cysteine residues of hair keratins. The matrix proteins include the high-sulfur and high-glycine-tyrosine keratins. The sequence is that of Keratin-associated protein 25-1 (KRTAP25-1) from Homo sapiens (Human).